The primary structure comprises 185 residues: Elongation factor P (185 aa).

The protein belongs to the elongation factor P family.

The protein resides in the cytoplasm. Its pathway is protein biosynthesis; polypeptide chain elongation. Its function is as follows. Involved in peptide bond synthesis. Stimulates efficient translation and peptide-bond synthesis on native or reconstituted 70S ribosomes in vitro. Probably functions indirectly by altering the affinity of the ribosome for aminoacyl-tRNA, thus increasing their reactivity as acceptors for peptidyl transferase. In Limosilactobacillus reuteri (strain DSM 20016) (Lactobacillus reuteri), this protein is Elongation factor P.